The sequence spans 360 residues: UDP-N-acetylglucosamine--N-acetylmuramyl-(pentapeptide) pyrophosphoryl-undecaprenol N-acetylglucosamine transferase (360 aa).

Residues 16-18, asparagine 128, arginine 165, serine 191, isoleucine 247, 266-271, and glutamine 292 each bind UDP-N-acetyl-alpha-D-glucosamine; these read TGG and ALTVSE.

It belongs to the glycosyltransferase 28 family. MurG subfamily.

Its subcellular location is the cell inner membrane. It catalyses the reaction di-trans,octa-cis-undecaprenyl diphospho-N-acetyl-alpha-D-muramoyl-L-alanyl-D-glutamyl-meso-2,6-diaminopimeloyl-D-alanyl-D-alanine + UDP-N-acetyl-alpha-D-glucosamine = di-trans,octa-cis-undecaprenyl diphospho-[N-acetyl-alpha-D-glucosaminyl-(1-&gt;4)]-N-acetyl-alpha-D-muramoyl-L-alanyl-D-glutamyl-meso-2,6-diaminopimeloyl-D-alanyl-D-alanine + UDP + H(+). It functions in the pathway cell wall biogenesis; peptidoglycan biosynthesis. Cell wall formation. Catalyzes the transfer of a GlcNAc subunit on undecaprenyl-pyrophosphoryl-MurNAc-pentapeptide (lipid intermediate I) to form undecaprenyl-pyrophosphoryl-MurNAc-(pentapeptide)GlcNAc (lipid intermediate II). This is UDP-N-acetylglucosamine--N-acetylmuramyl-(pentapeptide) pyrophosphoryl-undecaprenol N-acetylglucosamine transferase from Shewanella amazonensis (strain ATCC BAA-1098 / SB2B).